Consider the following 501-residue polypeptide: MRSSLAPGVWFFRAFSRDSWFRGLILLLTFLIYACYHMSRKPISIVKSRLHQNCSEQIKPINDTHSLNDTMWCSWAPFDKDNYKELLGGVDNAFLIAYAIGMFISGVFGERLPLRYYLSAGMLLSGLFTSLFGLGYFWNIHELWYFVVIQVCNGLVQTTGWPSVVTCVGNWFGKGKRGFIMGIWNSHTSVGNILGSLIAGIWVNGQWGLSFIVPGIITAVMGVITFLFLIEHPEDVDCAPPQHHGEPAENQDNPEDPGNSPCSIRESGLETVAKCSKGPCEEPAAISFFGALRIPGVVEFSLCLLFAKLVSYTFLYWLPLYIANVAHFSAKEAGDLSTLFDVGGIIGGIVAGLVSDYTNGRATTCCVMLILAAPMMFLYNYIGQDGIASSIVMLIICGGLVNGPYALITTAVSADLGTHKSLKGNAKALSTVTAIIDGTGSIGAALGPLLAGLISPTGWNNVFYMLISADVLACLLLCRLVYKEILAWKVSLSRGSGYKEI.

A helical membrane pass occupies residues 19-39; the sequence is SWFRGLILLLTFLIYACYHMS. Residues N53, N62, and N68 are each glycosylated (N-linked (GlcNAc...) asparagine). 5 consecutive transmembrane segments (helical) span residues 88–108, 118–138, 145–165, 189–209, and 210–230; these read GGVD…SGVF, LSAG…GYFW, YFVV…PSVV, SVGN…QWGL, and SFIV…LFLI. The disordered stretch occupies residues 240 to 262; it reads PPQHHGEPAENQDNPEDPGNSPC. 6 consecutive transmembrane segments (helical) span residues 302–322, 334–354, 362–382, 391–411, 434–454, and 462–482; these read LCLL…PLYI, GDLS…AGLV, ATTC…YNYI, IVML…ITTA, AIID…AGLI, and VFYM…RLVY.

It belongs to the major facilitator superfamily. Organophosphate:Pi antiporter (OPA) (TC 2.A.1.4) family. Detected in intestine and pancreas. Lower expression is also detected in liver and kidney.

Its subcellular location is the endoplasmic reticulum membrane. It carries out the reaction D-glucose 6-phosphate(in) + phosphate(out) = D-glucose 6-phosphate(out) + phosphate(in). With respect to regulation, inhibited by vanadate but not by chlorogenic acid. Its function is as follows. Inorganic phosphate and glucose-6-phosphate antiporter. May transport cytoplasmic glucose-6-phosphate into the lumen of the endoplasmic reticulum and translocate inorganic phosphate into the opposite direction. Independent of a lumenal glucose-6-phosphatase. May not play a role in homeostatic regulation of blood glucose levels. This chain is Glucose-6-phosphate exchanger SLC37A2, found in Homo sapiens (Human).